We begin with the raw amino-acid sequence, 968 residues long: Putative pectinesterase/pectinesterase inhibitor 26 (968 aa).

A helical membrane pass occupies residues 33–53 (IGISVAVLVAIIISSTVTIAI). The interval 71-230 (LTPAASLKTV…TEFTSNSLAI (160 aa)) is pectinesterase inhibitor 26 A. 10 N-linked (GlcNAc...) asparagine glycosylation sites follow: N101, N158, N219, N295, N352, N400, N464, N541, N559, and N603. Residues 265–430 (LTPAASLRNV…RKFTSNSLAI (166 aa)) are pectinesterase inhibitor 26 B. Residues 453 to 614 (PTPSSVLRTV…TEFTSNSLAI (162 aa)) form a pectinesterase inhibitor 26 C region. A pectinesterase 26 region spans residues 660–954 (HVTVAADGSG…FTVKYFLRGD (295 aa)). A substrate-binding site is contributed by T735. Residue N737 is glycosylated (N-linked (GlcNAc...) asparagine). Q765 lines the substrate pocket. The Proton donor; for pectinesterase activity role is filled by D788. The cysteines at positions 802 and 822 are disulfide-linked. The Nucleophile; for pectinesterase activity role is filled by D809. N863 carries N-linked (GlcNAc...) asparagine glycosylation. Positions 872 and 874 each coordinate substrate. An N-linked (GlcNAc...) asparagine glycan is attached at N900.

It in the N-terminal section; belongs to the PMEI family. In the C-terminal section; belongs to the pectinesterase family. Expressed in flowers.

Its subcellular location is the membrane. It catalyses the reaction [(1-&gt;4)-alpha-D-galacturonosyl methyl ester](n) + n H2O = [(1-&gt;4)-alpha-D-galacturonosyl](n) + n methanol + n H(+). The protein operates within glycan metabolism; pectin degradation; 2-dehydro-3-deoxy-D-gluconate from pectin: step 1/5. In terms of biological role, acts in the modification of cell walls via demethylesterification of cell wall pectin. The polypeptide is Putative pectinesterase/pectinesterase inhibitor 26 (PME26) (Arabidopsis thaliana (Mouse-ear cress)).